The following is a 139-amino-acid chain: Ribonuclease VapC3 (139 aa).

The 108-residue stretch at 14 to 121 (EAIVLDTGAF…VATDDYTLQR (108 aa)) folds into the PINc domain. Residue Asp19 participates in Mg(2+) binding.

Belongs to the PINc/VapC protein family. Mg(2+) serves as cofactor.

Functionally, toxic component of a type II toxin-antitoxin (TA) system. An RNase. The protein is Ribonuclease VapC3 of Aeropyrum pernix (strain ATCC 700893 / DSM 11879 / JCM 9820 / NBRC 100138 / K1).